Consider the following 675-residue polypeptide: Methionine--tRNA ligase (675 aa).

Positions 15 to 25 match the 'HIGH' region motif; it reads PYANGSIHLGH. Zn(2+) is bound by residues cysteine 146, cysteine 149, cysteine 159, and cysteine 162. The 'KMSKS' region motif lies at 332 to 336; sequence KMSKS. Lysine 335 is an ATP binding site. Residues 573–675 form the tRNA-binding domain; the sequence is DFAKVDMRIA…SGAQPGMQVK (103 aa).

It belongs to the class-I aminoacyl-tRNA synthetase family. MetG type 1 subfamily. Homodimer. The cofactor is Zn(2+).

It localises to the cytoplasm. It carries out the reaction tRNA(Met) + L-methionine + ATP = L-methionyl-tRNA(Met) + AMP + diphosphate. Functionally, is required not only for elongation of protein synthesis but also for the initiation of all mRNA translation through initiator tRNA(fMet) aminoacylation. This Yersinia pestis bv. Antiqua (strain Angola) protein is Methionine--tRNA ligase.